A 3726-amino-acid chain; its full sequence is Zinc finger homeobox protein 3 (3726 aa).

Disordered stretches follow at residues 1-79 (MEGC…SKEV) and 95-129 (MEHHCPGTHPPPALREESASDTSEEGEEESDVENL). The segment at 79-103 (VSCNECSASFSSLQTYMEHHCPGTH) adopts a C2H2-type 1 zinc-finger fold. The segment covering 116 to 126 (TSEEGEEESDV) has biased composition (acidic residues). The segment at 282–305 (LMCFLCKLSFGYVRSFVTHAVHDH) adopts a C2H2-type 2 zinc-finger fold. Residues 417–557 (SVPLGPLASS…GPASTTSNSA (141 aa)) are disordered. Phosphoserine is present on S426. T428 is subject to Phosphothreonine. A compositionally biased stretch (basic and acidic residues) spans 431–459 (SEGKDSGAAEGDKQESGGHQDCFSEKVEP). Acidic residues-rich tracts occupy residues 460–491 (AEEEEAEEEEEEEEEAEEEEEEEEEEEEEEEE) and 500–510 (DLEEELEDSPS). Positions 528-557 (SNPSISNSPLMPNVLQTLSRGPASTTSNSA) are enriched in polar residues. Phosphoserine occurs at positions 535 and 573. The segment at 590-621 (DFADESANKDSATAPEPNESTEGDDGGFVPHH) is disordered. C2H2-type zinc fingers lie at residues 641-664 (VECPKCDTVLGSSRSLGGHMTMMH), 672-695 (LKCPKCNWHYKYQQTLEAHMKEKH), and 727-751 (FRCEVCNYSTTTKGNLSIHMQSDKH). The C2H2-type 6; atypical zinc-finger motif lies at 805–829 (WRCEVCDYETNVARNLRIHMTSEKH). Residues 946–969 (FQCAVCNKFTTDNLDMLGLHMNVE) form a C2H2-type 7; degenerate zinc finger. A C2H2-type 8; atypical zinc finger spans residues 985–1009 (YQCKLCRYNTQLKANFQLHCKTDKH). A C2H2-type 9; atypical zinc finger spans residues 1041–1065 (LKCNACDYYTNSLEKLRLHTVNSRH). A C2H2-type 10; atypical zinc finger spans residues 1089–1113 (YHCVLCNYSTKAKLNLIQHVRSMKH). The tract at residues 1125–1228 (LQKGLPEEDE…KRPKASEEIK (104 aa)) is disordered. Over residues 1149–1159 (DPEEPVEDAEG) the composition is skewed to acidic residues. Composition is skewed to polar residues over residues 1175-1191 (GSGSEEGQSKRAASSSQ) and 1199-1217 (SPATTKRTSFPGSSETPLS). At S1207 the chain carries Phosphoserine. The C2H2-type 11; atypical zinc-finger motif lies at 1233-1256 (YQCPYCKYSNADVNRLRVHAMTQH). The C2H2-type 12 zinc finger occupies 1262–1285 (LRCPLCQDMLNNKIHLQLHLTHLH). The tract at residues 1320 to 1361 (DGNSTLEEVGKQPEASEDPGKNILPPASMEHGGDLKPTSADP) is disordered. C2H2-type zinc fingers lie at residues 1370 to 1395 (FLCWKKGCNQVFKTSATLQTHFNEVH), 1411 to 1433 (YRCNQCSLAFKTIEKLQLHSQYH), and 1439 to 1462 (TMCCLCQRSFRTFQALKKHLETSH). Residues 1500-1539 (EEDKEEESDLEDKQSPTGSDSGSVQEDSGSEPKRALPFRK) form a disordered region. Residues 1514–1526 (SPTGSDSGSVQED) show a composition bias toward polar residues. The C2H2-type 16 zinc-finger motif lies at 1555–1579 (YKCTVCKESFTQKNILLVHYNSVSH). S1600 is modified (phosphoserine). A C2H2-type 17 zinc finger spans residues 1606–1630 (FKCNTCNVAYSQSSTLEIHMRSVLH). 3 disordered regions span residues 1639–1678 (LEAASGNSNGTGNSGGVSLSSSTPSPVGSSGANNTFTATN), 1706–1738 (NPISANIASPSEPKEANRKKLADMIASRQQQQQ), and 1866–1943 (LSQS…PRIA). Positions 1643–1669 (SGNSNGTGNSGGVSLSSSTPSPVGSSG) are enriched in low complexity. Residues 1717 to 1727 (EPKEANRKKLA) are compositionally biased toward basic and acidic residues. Residues 1866–1878 (LSQSHSALLQPSQ) are compositionally biased toward low complexity. Positions 1879–1902 (HPEKKNKVVIKEKDKESQREREGP) are enriched in basic and acidic residues. Residues 1990 to 2013 (LECDSCGKLFSNILILKSHQEHVH) form a C2H2-type 18 zinc finger. Disordered stretches follow at residues 2037–2089 (YPLR…AQPS) and 2211–2249 (NKDSPYNFSNPPITSLEELKIDSRPPSPEPQKQEYWGSK). Positions 2041 to 2066 (PQTPEPPPPPPPPPPPPLPTAPPQPA) are enriched in pro residues. The homeobox 1 DNA-binding region spans 2152-2211 (NKRPRTRITDDQLRVLRQYFDINNSPSEEQIKEMADKSGLPQKVIKHWFRNTLFKERQRN). Polar residues predominate over residues 2214–2223 (SPYNFSNPPI). A DNA-binding region (homeobox 2) is located at residues 2249–2308 (KRSSRTRFTDYQLRVLQDFFDANAYPKDDEFEQLSNLLNLPTRVIVVWFQNARQKARKNY). Residues 2335 to 2358 (YQCKKCSLVFQRIFDLIKHQKKLC) form a C2H2-type 19; atypical zinc finger. Residue K2356 forms a Glycyl lysine isopeptide (Lys-Gly) (interchain with G-Cter in SUMO1) linkage. Disordered stretches follow at residues 2383–2405 (TPTSSSCSTPMPSQAYSTPAPSA) and 2429–2529 (NSKA…PQQL). Residues 2458-2478 (QPKPEMQQQLEQLEQKTNAPQ) are compositionally biased toward low complexity. Over residues 2479–2507 (PKLPQPAAPSLPQPPPQAPPPQCPLPQSS) the composition is skewed to pro residues. The span at 2508–2521 (PSPSQLSHLPLKPL) shows a compositional bias: low complexity. The segment at 2539–2561 (YQCDQCKLAFPSFEHWQEHQQLH) adopts a C2H2-type 20 zinc-finger fold. The short motif at 2624-2626 (KRK) is the Nuclear localization signal element. The segment at 2628 to 2656 (EEKASASPGENDSGTGGEEPQRDKRLRTT) is disordered. A Phosphoserine modification is found at S2634. Positions 2650 to 2709 (DKRLRTTITPEQLEILYQKYLLDSNPTRKMLDHIAHEVGLKKRVVQVWFQNTRARERKGQ) form a DNA-binding region, homeobox 3. A C2H2-type 21 zinc finger spans residues 2720–2743 (RRCPFCRALFKAKTALEAHIRSRH). Residues 2780–2789 (SHLPPSSSDG) show a composition bias toward polar residues. The disordered stretch occupies residues 2780–2805 (SHLPPSSSDGQGVPLSPVSKTMELSP). Phosphoserine occurs at positions 2795 and 2804. Residue K2815 forms a Glycyl lysine isopeptide (Lys-Gly) (interchain with G-Cter in SUMO1); alternate linkage. A Glycyl lysine isopeptide (Lys-Gly) (interchain with G-Cter in SUMO2); alternate cross-link involves residue K2815. Residues 2850 to 2877 (AITDTTTGDEGNADNDSATGIATETKSS) form a disordered region. A phosphoserine mark is found at S2900 and S2904. The interval 2920–2955 (VDYSETSSLADPCSPSPGASGSAGKSGDGGDRPGQK) is disordered. Residues 2929-2944 (ADPCSPSPGASGSAGK) are compositionally biased toward low complexity. The homeobox 4 DNA-binding region spans 2952-3011 (PGQKRFRTQMTNLQLKVLKSCFNDYRTPTMLECEVLGNDIGLPKRVVQVWFQNARAKEKK). The C2H2-type 22 zinc-finger motif lies at 3032-3056 (TECTLCGIKYSARLSVRDHIFSQQH). 2 disordered regions span residues 3145-3274 (FTPA…AGTG) and 3415-3476 (QQQQ…SASA). Residues 3147–3156 (PANTALTSPK) are compositionally biased toward polar residues. Residues 3181–3199 (PSSASLSSPTPAQATMAMA) show a composition bias toward low complexity. The span at 3200 to 3221 (PQPPPQPQQPQPPVQQPPPPPA) shows a compositional bias: pro residues. The span at 3222 to 3234 (AQQIPAPQLTPQQ) shows a compositional bias: low complexity. The segment covering 3235–3267 (QRKDKDGEKGKEKEKAHKGKGEPLPVPKKEKGE) has biased composition (basic and acidic residues). A Glycyl lysine isopeptide (Lys-Gly) (interchain with G-Cter in SUMO1) cross-link involves residue K3262. A Phosphoserine modification is found at S3434. Over residues 3435–3453 (PDKDPAKESPKPEEQKNVP) the composition is skewed to basic and acidic residues. S3457 is modified (phosphoserine). A C2H2-type 23 zinc finger spans residues 3552–3576 (YHCLACESALCGEEALSQHLESALH). Residues 3588-3726 (AKEHPSLLPH…TSVGTDTFRL (139 aa)) are disordered. Low complexity-rich tracts occupy residues 3605–3618 (STASTSQSAAHSND) and 3645–3677 (SRASAAKPPSFPPLSSSSTVTSSSCSTSGVQPS). A Phosphoserine modification is found at S3616. Phosphoserine is present on S3700. Residues 3715–3726 (GLTSVGTDTFRL) are compositionally biased toward polar residues.

In terms of assembly, interacts with ALKBH4 and PIAS3. Interacts with FNBP3. Interacts with ESR1, RUNX3, TRIM25, SMAD2 and SMAD3. Phosphorylated at Ser-2634 in both embryonic and adult brain. Phosphorylation at Ser-1600, Ser-2795, Ser-2804, Ser-2900, Ser-3434, Ser-3616 and Ser-3700 is restricted to the embryonic brain. Hyperphosphorylation in embryonic brain protects ZFHX3 from calpain/CAPN1-mediated degradation. In terms of processing, ubiquitinated, leading to its proteasomal degradation. Post-translationally, nuclear localization is essential for its sumoylation. As to expression, expressed in suprachiasmatic nucleus (SCN) of the brain (at protein level). Expressed in skeletal muscle. Levels of expression are high in myoblasts but low in differentiated muscle. Expressed in the heart, primarily in the atria.

Its subcellular location is the nucleus. The protein resides in the cytoplasm. Its function is as follows. Transcriptional regulator which can act as an activator or a repressor. Inhibits the enhancer element of the AFP gene by binding to its AT-rich core sequence. In concert with SMAD-dependent TGF-beta signaling can repress the transcription of AFP via its interaction with SMAD2/3. Regulates the circadian locomotor rhythms via transcriptional activation of neuropeptidergic genes which are essential for intercellular synchrony and rhythm amplitude in the suprachiasmatic nucleus (SCN) of the brain. Regulator of myoblasts differentiation through the binding to the AT-rich sequence of MYF6 promoter and promoter repression. Down-regulates the MUC5AC promoter in gastric cancer. In association with RUNX3, up-regulates CDKN1A promoter activity following TGF-beta stimulation. In Mus musculus (Mouse), this protein is Zinc finger homeobox protein 3 (Zfhx3).